The chain runs to 531 residues: Coiled-coil domain-containing protein 9 (531 aa).

Residues 40–531 (EDRKKAELEG…PGEAWPFESV (492 aa)) form a disordered region. The segment covering 59 to 72 (RSVEKENVAVESEK) has biased composition (basic and acidic residues). S80 bears the Phosphoserine mark. T95 carries the post-translational modification Phosphothreonine. An Omega-N-methylarginine modification is found at R107. Residue S111 is modified to Phosphoserine. Residues R121, R128, and R130 each carry the omega-N-methylarginine modification. R131, R133, and R135 each carry asymmetric dimethylarginine. Phosphoserine is present on S137. 3 stretches are compositionally biased toward basic and acidic residues: residues 148–185 (ISDRKSKEWEERRRQNIEKMNEEMEKIAEYERNQREGV), 194–217 (FLDDPRRRSGPLEESERDRREESR), and 227–241 (DFERVRCGLEHERQG). Residues 149-185 (SDRKSKEWEERRRQNIEKMNEEMEKIAEYERNQREGV) adopt a coiled-coil conformation. Residue S202 is modified to Phosphoserine. Phosphoserine occurs at positions 248 and 255. Composition is skewed to basic and acidic residues over residues 258–279 (GRERSEYLRWKQEREKIDQERL), 289–302 (WRREWDAEKTDGMF), 311–320 (EPSHRYDDQA), and 361–372 (YSDHDDRWETKE). Residues S376, S386, and S390 each carry the phosphoserine modification. The segment covering 386–395 (SPETSPKETP) has biased composition (low complexity). Positions 396–406 (MQPPEIPAPAH) are enriched in pro residues. Positions 411–446 (DEGEENEGEEDEEWEDISEDEEEEEIEVEEGDEEEP) are enriched in acidic residues. S521 is subject to Phosphoserine.

As to quaternary structure, probable component of the exon junction complex (EJC); the association is RNA-dependent.

In terms of biological role, probable component of the exon junction complex (EJC), a multiprotein complex that associates immediately upstream of the exon-exon junction on mRNAs and serves as a positional landmark for the intron exon structure of genes and directs post-transcriptional processes in the cytoplasm such as mRNA export, nonsense-mediated mRNA decay (NMD) or translation. In Homo sapiens (Human), this protein is Coiled-coil domain-containing protein 9.